A 1494-amino-acid chain; its full sequence is B-cell CLL/lymphoma 9-like protein (1494 aa).

2 disordered regions span residues 1–236 and 269–496; these read MRIL…PPSQ and VPRA…DMGQ. Pro residues predominate over residues 20–37; the sequence is GSPPLSPRGHCPPAPAKP. Phosphoserine is present on residues Ser21 and Ser25. Lys36 is subject to N6-acetyllysine. 2 stretches are compositionally biased toward polar residues: residues 45-70 and 85-96; these read TNHG…TCNL and NQISPSNSSLKN. Ser88 is modified (phosphoserine). An N6-acetyllysine mark is found at Lys108 and Lys110. Composition is skewed to basic and acidic residues over residues 114 to 126 and 134 to 153; these read ERSV…EQRE and SEAK…ERKQ. A phosphoserine mark is found at Ser116 and Ser118. Lys137 is subject to N6-acetyllysine. Residues 193-207 show a composition bias toward polar residues; sequence PGQTAQLPLSESSAP. Composition is skewed to pro residues over residues 279 to 289 and 299 to 322; these read KVPPTPEPLPL and SQPP…PPEG. Residues 302 to 530 form a necessary for interaction with CTNNB1 region; it reads PPLPPPPPAP…QEEYYEEKRR (229 aa). Positions 348-360 are enriched in low complexity; sequence THPNTPTAATANN. Residues 396–418 show a composition bias toward basic and acidic residues; that stretch reads LSKEQLEHRERSLQTLRDIERLL. Position 421 is a phosphoserine (Ser421). Phosphothreonine is present on Thr511. At Arg677 the chain carries Asymmetric dimethylarginine. Phosphoserine occurs at positions 747, 810, 912, 923, 935, 939, 944, 972, 984, 988, 994, 1001, 1007, and 1014. Disordered regions lie at residues 905-1082 and 1113-1206; these read RGLG…NPLS and ELLP…PGGP. Polar residues predominate over residues 932–957; that stretch reads PTLSQVHSPLVTSPSANLKSPQTPSQ. The segment covering 974 to 993 has biased composition (polar residues); the sequence is QVLSSSLGVRSPTGSPSRLK. The span at 1016 to 1035 shows a compositional bias: polar residues; that stretch reads GVSQNKQPPLSINSSSTLGN. Positions 1046-1059 are enriched in low complexity; it reads PRNSSSAPPANPSS. Over residues 1060–1082 the composition is skewed to polar residues; the sequence is GLMNPSLPFTSSPDPTPSQNPLS. Positions 1119 to 1129 are enriched in pro residues; that stretch reads PLLPPPPPPQG. Positions 1133–1143 are enriched in polar residues; it reads GISNNQPNQMH. The span at 1165–1176 shows a compositional bias: pro residues; sequence HEPPPTMLPSPT. Lys1339 participates in a covalent cross-link: Glycyl lysine isopeptide (Lys-Gly) (interchain with G-Cter in SUMO2).

This sequence belongs to the BCL9 family. Found in a complex with CDC73; CTNNB1 and PYGO1. Interacts with CTNNB1. As to expression, expressed in kidney, liver, lung, testis, brain, spleen, heart and skeletal muscle. Highly expressed in numerous colorectal tumors compared to corresponding non-cancerous tissues.

Its subcellular location is the nucleus. Its function is as follows. Transcriptional regulator that acts as an activator. Promotes beta-catenin transcriptional activity. Plays a role in tumorigenesis. Enhances the neoplastic transforming activity of CTNNB1. The sequence is that of B-cell CLL/lymphoma 9-like protein (Bcl9l) from Mus musculus (Mouse).